The following is a 302-amino-acid chain: Ribosomal RNA small subunit methyltransferase A (302 aa).

The S-adenosyl-L-methionine site is built by Asn-27, Leu-29, Gly-54, Glu-75, Asp-100, and Asn-138.

It belongs to the class I-like SAM-binding methyltransferase superfamily. rRNA adenine N(6)-methyltransferase family. RsmA subfamily.

It localises to the cytoplasm. The enzyme catalyses adenosine(1518)/adenosine(1519) in 16S rRNA + 4 S-adenosyl-L-methionine = N(6)-dimethyladenosine(1518)/N(6)-dimethyladenosine(1519) in 16S rRNA + 4 S-adenosyl-L-homocysteine + 4 H(+). Its function is as follows. Specifically dimethylates two adjacent adenosines (A1518 and A1519) in the loop of a conserved hairpin near the 3'-end of 16S rRNA in the 30S particle. May play a critical role in biogenesis of 30S subunits. This Natranaerobius thermophilus (strain ATCC BAA-1301 / DSM 18059 / JW/NM-WN-LF) protein is Ribosomal RNA small subunit methyltransferase A.